We begin with the raw amino-acid sequence, 210 residues long: Redox-sensing transcriptional repressor Rex (210 aa).

The segment at residues 17–56 (KYHRYLYELLKNDVDRISSKELSEKIGFTASQIRQDLNCF) is a DNA-binding region (H-T-H motif). NAD(+) is bound at residue 91-96 (GAGNIG).

Belongs to the transcriptional regulatory Rex family. Homodimer.

The protein localises to the cytoplasm. Its function is as follows. Modulates transcription in response to changes in cellular NADH/NAD(+) redox state. This is Redox-sensing transcriptional repressor Rex from Clostridium botulinum (strain Loch Maree / Type A3).